Here is a 329-residue protein sequence, read N- to C-terminus: L-carnitine dehydrogenase (329 aa).

G19 to G24 contributes to the NAD(+) binding site.

It belongs to the 3-hydroxyacyl-CoA dehydrogenase family. L-carnitine dehydrogenase subfamily. In terms of assembly, homodimer.

Its subcellular location is the cytoplasm. It catalyses the reaction carnitine + NAD(+) = 3-dehydrocarnitine + NADH + H(+). It participates in amine and polyamine metabolism; carnitine metabolism. Its function is as follows. Catalyzes the NAD(+)-dependent oxidation of L-carnitine to 3-dehydrocarnitine. This Nocardiopsis dassonvillei (strain ATCC 23218 / DSM 43111 / CIP 107115 / JCM 7437 / KCTC 9190 / NBRC 14626 / NCTC 10488 / NRRL B-5397 / IMRU 509) (Actinomadura dassonvillei) protein is L-carnitine dehydrogenase.